The primary structure comprises 282 residues: Shikimate dehydrogenase (NADP(+)) (282 aa).

Residues 19 to 21 (TQS) and Thr-66 each bind shikimate. Lys-70 (proton acceptor) is an active-site residue. Residues Asn-91 and Asp-107 each coordinate shikimate. Residues 132–136 (GAGGA), 155–160 (NRTITR), Ile-224, and Gly-246 each bind NADP(+).

The protein belongs to the shikimate dehydrogenase family. As to quaternary structure, homodimer.

The enzyme catalyses shikimate + NADP(+) = 3-dehydroshikimate + NADPH + H(+). It functions in the pathway metabolic intermediate biosynthesis; chorismate biosynthesis; chorismate from D-erythrose 4-phosphate and phosphoenolpyruvate: step 4/7. Its function is as follows. Involved in the biosynthesis of the chorismate, which leads to the biosynthesis of aromatic amino acids. Catalyzes the reversible NADPH linked reduction of 3-dehydroshikimate (DHSA) to yield shikimate (SA). This is Shikimate dehydrogenase (NADP(+)) from Buchnera aphidicola subsp. Baizongia pistaciae (strain Bp).